Here is a 142-residue protein sequence, read N- to C-terminus: Ctenidin-3 (142 aa).

The N-terminal stretch at 1–19 is a signal peptide; it reads MKHLIPLIVMASVVLAVYA. Tyr-139 carries the post-translational modification Tyrosine amide.

In terms of tissue distribution, expressed in hemocytes (at protein level).

The protein resides in the secreted. Antimicrobial protein with bacteriostatic activity against the Gram-negative bacterium E.coli, and very weak activity against the Gram-positive bacterium S.aureus. Lacks activity against the yeast C.albicans. This Cupiennius salei (American wandering spider) protein is Ctenidin-3.